The chain runs to 203 residues: Glycerol-3-phosphate acyltransferase (203 aa).

The next 6 membrane-spanning stretches (helical) occupy residues 5–25 (IIYLLAYLIGAIPFGLLLAQI), 58–78 (TLAVATVILDALKGVLPILMA), 87–107 (ILWTMAVLAVFGHCFSPYLKF), 118–138 (GVLAVFLPFEIICALLAWFII), 150–170 (LGAMIVLIATSFIFHYDIPVI), and 176–196 (IFIIAFIVVYKHIPNILRLIG).

The protein belongs to the PlsY family. In terms of assembly, probably interacts with PlsX.

The protein resides in the cell inner membrane. The enzyme catalyses an acyl phosphate + sn-glycerol 3-phosphate = a 1-acyl-sn-glycero-3-phosphate + phosphate. It functions in the pathway lipid metabolism; phospholipid metabolism. Functionally, catalyzes the transfer of an acyl group from acyl-phosphate (acyl-PO(4)) to glycerol-3-phosphate (G3P) to form lysophosphatidic acid (LPA). This enzyme utilizes acyl-phosphate as fatty acyl donor, but not acyl-CoA or acyl-ACP. The sequence is that of Glycerol-3-phosphate acyltransferase from Campylobacter lari (strain RM2100 / D67 / ATCC BAA-1060).